The primary structure comprises 98 residues: Large ribosomal subunit protein uL23 (98 aa).

The protein belongs to the universal ribosomal protein uL23 family. In terms of assembly, part of the 50S ribosomal subunit. Contacts protein L29, and trigger factor when it is bound to the ribosome.

Functionally, one of the early assembly proteins it binds 23S rRNA. One of the proteins that surrounds the polypeptide exit tunnel on the outside of the ribosome. Forms the main docking site for trigger factor binding to the ribosome. This chain is Large ribosomal subunit protein uL23, found in Nitrosococcus oceani (strain ATCC 19707 / BCRC 17464 / JCM 30415 / NCIMB 11848 / C-107).